A 197-amino-acid chain; its full sequence is MLERIKDSFTESIQTKIDAAEALPESIAKAAEMMVQCLLGGNKILACGNGGSAGDAQHFSAELLNRYEIERPPLPAIALSTDTSTITAIANDYSYDEIFSKQILALGQPGDILLAISTSGNSGNVIKAMEAALSRDMTIVALTGKDGGAMAGLLSVGDVEIRVPSNVTARIQEVHLLVIHCLCDNIDRTLFPQDEQQ.

An SIS domain is found at 34 to 196 (MVQCLLGGNK…DRTLFPQDEQ (163 aa)). 49–51 (NGG) is a substrate binding site. Zn(2+) is bound by residues His58 and Glu62. Substrate-binding positions include Glu62, 91-92 (ND), 117-119 (STS), Ser122, and Gln172. Residues Gln172 and His180 each coordinate Zn(2+).

Belongs to the SIS family. GmhA subfamily. As to quaternary structure, homotetramer. The cofactor is Zn(2+).

Its subcellular location is the cytoplasm. The enzyme catalyses 2 D-sedoheptulose 7-phosphate = D-glycero-alpha-D-manno-heptose 7-phosphate + D-glycero-beta-D-manno-heptose 7-phosphate. Its pathway is carbohydrate biosynthesis; D-glycero-D-manno-heptose 7-phosphate biosynthesis; D-glycero-alpha-D-manno-heptose 7-phosphate and D-glycero-beta-D-manno-heptose 7-phosphate from sedoheptulose 7-phosphate: step 1/1. Functionally, catalyzes the isomerization of sedoheptulose 7-phosphate in D-glycero-D-manno-heptose 7-phosphate. This chain is Phosphoheptose isomerase, found in Shewanella oneidensis (strain ATCC 700550 / JCM 31522 / CIP 106686 / LMG 19005 / NCIMB 14063 / MR-1).